Reading from the N-terminus, the 471-residue chain is UDP-N-acetylmuramate--L-alanine ligase (471 aa).

114-120 is a binding site for ATP; it reads GTHGKTT.

Belongs to the MurCDEF family.

The protein localises to the cytoplasm. It carries out the reaction UDP-N-acetyl-alpha-D-muramate + L-alanine + ATP = UDP-N-acetyl-alpha-D-muramoyl-L-alanine + ADP + phosphate + H(+). It functions in the pathway cell wall biogenesis; peptidoglycan biosynthesis. Its function is as follows. Cell wall formation. The protein is UDP-N-acetylmuramate--L-alanine ligase of Methylobacterium sp. (strain 4-46).